The primary structure comprises 72 residues: Mitotic-spindle organizing protein 1 (72 aa).

The protein belongs to the MOZART1 family. Part of the gamma-tubulin complex.

The protein localises to the cytoplasm. It localises to the cytoskeleton. It is found in the microtubule organizing center. The protein resides in the spindle pole body. In terms of biological role, required for gamma-tubulin complex recruitment to the microtubule organizing center (MTOC). This Cryptococcus neoformans var. neoformans serotype D (strain B-3501A) (Filobasidiella neoformans) protein is Mitotic-spindle organizing protein 1.